The following is a 305-amino-acid chain: Aspartate carbamoyltransferase catalytic subunit (305 aa).

Residues R53 and T54 each coordinate carbamoyl phosphate. K82 is a binding site for L-aspartate. Carbamoyl phosphate contacts are provided by R103, H131, and Q134. Residues R164 and R226 each coordinate L-aspartate. L265 and P266 together coordinate carbamoyl phosphate.

It belongs to the aspartate/ornithine carbamoyltransferase superfamily. ATCase family. As to quaternary structure, heterooligomer of catalytic and regulatory chains.

It catalyses the reaction carbamoyl phosphate + L-aspartate = N-carbamoyl-L-aspartate + phosphate + H(+). The protein operates within pyrimidine metabolism; UMP biosynthesis via de novo pathway; (S)-dihydroorotate from bicarbonate: step 2/3. Functionally, catalyzes the condensation of carbamoyl phosphate and aspartate to form carbamoyl aspartate and inorganic phosphate, the committed step in the de novo pyrimidine nucleotide biosynthesis pathway. This chain is Aspartate carbamoyltransferase catalytic subunit, found in Ignicoccus hospitalis (strain KIN4/I / DSM 18386 / JCM 14125).